We begin with the raw amino-acid sequence, 336 residues long: Holliday junction branch migration complex subunit RuvB (336 aa).

The large ATPase domain (RuvB-L) stretch occupies residues 1–183 (MATERLVAGN…FGINSRLEFY (183 aa)). ATP-binding positions include Leu22, Arg23, Gly64, Lys67, Thr68, Thr69, 130–132 (EDF), Arg173, Tyr183, and Arg220. Thr68 lines the Mg(2+) pocket. Residues 184 to 254 (QVAELEEIIR…VAREALELLQ (71 aa)) form a small ATPAse domain (RuvB-S) region. The head domain (RuvB-H) stretch occupies residues 257–336 (AAGLDSSDRR…LGIKPEDRLF (80 aa)). Arg312 and Arg317 together coordinate DNA.

Belongs to the RuvB family. Homohexamer. Forms an RuvA(8)-RuvB(12)-Holliday junction (HJ) complex. HJ DNA is sandwiched between 2 RuvA tetramers; dsDNA enters through RuvA and exits via RuvB. An RuvB hexamer assembles on each DNA strand where it exits the tetramer. Each RuvB hexamer is contacted by two RuvA subunits (via domain III) on 2 adjacent RuvB subunits; this complex drives branch migration. In the full resolvosome a probable DNA-RuvA(4)-RuvB(12)-RuvC(2) complex forms which resolves the HJ.

It localises to the cytoplasm. The enzyme catalyses ATP + H2O = ADP + phosphate + H(+). The RuvA-RuvB-RuvC complex processes Holliday junction (HJ) DNA during genetic recombination and DNA repair, while the RuvA-RuvB complex plays an important role in the rescue of blocked DNA replication forks via replication fork reversal (RFR). RuvA specifically binds to HJ cruciform DNA, conferring on it an open structure. The RuvB hexamer acts as an ATP-dependent pump, pulling dsDNA into and through the RuvAB complex. RuvB forms 2 homohexamers on either side of HJ DNA bound by 1 or 2 RuvA tetramers; 4 subunits per hexamer contact DNA at a time. Coordinated motions by a converter formed by DNA-disengaged RuvB subunits stimulates ATP hydrolysis and nucleotide exchange. Immobilization of the converter enables RuvB to convert the ATP-contained energy into a lever motion, pulling 2 nucleotides of DNA out of the RuvA tetramer per ATP hydrolyzed, thus driving DNA branch migration. The RuvB motors rotate together with the DNA substrate, which together with the progressing nucleotide cycle form the mechanistic basis for DNA recombination by continuous HJ branch migration. Branch migration allows RuvC to scan DNA until it finds its consensus sequence, where it cleaves and resolves cruciform DNA. This Moorella thermoacetica (strain ATCC 39073 / JCM 9320) protein is Holliday junction branch migration complex subunit RuvB.